The following is a 319-amino-acid chain: Ribonuclease Z (319 aa).

The Zn(2+) site is built by histidine 62, histidine 64, aspartate 66, histidine 67, histidine 145, aspartate 215, and histidine 273. Aspartate 66 serves as the catalytic Proton acceptor.

The protein belongs to the RNase Z family. As to quaternary structure, homodimer. The cofactor is Zn(2+).

It carries out the reaction Endonucleolytic cleavage of RNA, removing extra 3' nucleotides from tRNA precursor, generating 3' termini of tRNAs. A 3'-hydroxy group is left at the tRNA terminus and a 5'-phosphoryl group is left at the trailer molecule.. Zinc phosphodiesterase, which displays some tRNA 3'-processing endonuclease activity. Probably involved in tRNA maturation, by removing a 3'-trailer from precursor tRNA. This Borreliella afzelii (strain PKo) (Borrelia afzelii) protein is Ribonuclease Z.